Reading from the N-terminus, the 299-residue chain is Glutamate formimidoyltransferase (299 aa).

His-82 acts as the For formimidoyltransferase activity in catalysis. 163-172 (GDRKIHPTAG) contacts folate.

This sequence belongs to the formiminotransferase family.

It localises to the cytoplasm. The catalysed reaction is (6S)-5-formyl-5,6,7,8-tetrahydrofolate + L-glutamate = N-formyl-L-glutamate + (6S)-5,6,7,8-tetrahydrofolate + H(+). The enzyme catalyses 5-formimidoyltetrahydrofolate + L-glutamate = N-formimidoyl-L-glutamate + (6S)-5,6,7,8-tetrahydrofolate. It catalyses the reaction (6S)-5-formyl-5,6,7,8-tetrahydrofolate + ATP = (6R)-5,10-methenyltetrahydrofolate + ADP + phosphate. It functions in the pathway amino-acid degradation; L-histidine degradation into L-glutamate; L-glutamate from N-formimidoyl-L-glutamate (transferase route): step 1/1. It participates in one-carbon metabolism; tetrahydrofolate interconversion. In terms of biological role, catalyzes the transfer of the formyl group from N-formylglutamate to tetrahydrofolate (THF) to yield 5-formyltetrahydrofolate (5-CHO-THF) and glutamate (Glu). The triglutamate form of 5-CHO-THF (5-CHO-THF-Glu3) can also be used as substrate. It can also catalyze the transfer of the formimino group from N-formiminoglutamate to tetrahydrofolate (THF) to yield 5-formiminotetrahydrofolate (5-NH=CH-THF) and glutamate (Glu). It can replace YgfA to catalyze the irreversible ATP-dependent transformation of 5-CHO-THF to form 5,10-methenyltetrahydrofolate (5,10-CH=THF). The chain is Glutamate formimidoyltransferase from Streptococcus pyogenes serotype M1.